A 145-amino-acid chain; its full sequence is MKFNPFVTSDRSKNRKRHFNAPSHIRRKIMSSPLSKELRQKYNVRSMPIRKDDEVQVVRGHYKGQQIGKVVQVYRKKYVIYIERVQREKANGTTVHVGIHPSKVVITRLKLDKDRKKILERKAKSRQVGKEKGKYKEETIEKMQE.

2 disordered regions span residues 1 to 21 (MKFNPFVTSDRSKNRKRHFNA) and 122 to 145 (KAKSRQVGKEKGKYKEETIEKMQE). Lysine 136 is covalently cross-linked (Glycyl lysine isopeptide (Lys-Gly) (interchain with G-Cter in SUMO2)). The residue at position 139 (threonine 139) is a Phosphothreonine.

The protein belongs to the universal ribosomal protein uL24 family. Component of the large ribosomal subunit. Interacts with DHX33. In terms of processing, ufmylated by UFL1 in response to endoplasmic reticulum stress, promoting reticulophagy of endoplasmic reticulum sheets.

Its subcellular location is the cytoplasm. Functionally, component of the large ribosomal subunit. The ribosome is a large ribonucleoprotein complex responsible for the synthesis of proteins in the cell. This is Large ribosomal subunit protein uL24 (RPL26) from Bos taurus (Bovine).